The following is a 445-amino-acid chain: MAGEGDQQDAAHNMGNHLPLLPADSEDEDDEIEMEVEDQDSKEARKPNIINFDTSLPTSHTYLGADMEEFHGRTLHDDDSCQVIPVLPEVLMILIPGQTLPLQLSHPQEVSMVRNLIQKDRTFAVLAYSNVQEREAQFGTTAEIYAYREEQEFGIEVVKVKAIGRQRFKVLELRTQSDGIQQAKVQILPECVLPSTMSAVQLESLNKCQVFPSKPISWEDQYSCKWWQKYQKRKFHCANLTSWPRWLYSLYDAETLMDRIKKQLREWDENLKDDSLPENPIDFSYRVAACLPIDDVLRIQLLKIGSAIQRLRCELDIMNKCTSLCCKQCQETEITTKNEIFSLSLCGPMAAYVNPHGYVHETLTVYKASNLNLIGRPSTVHSWFPGYAWTIAQCKICASHIGWKFTATKKDMSPQKFWGLTRSALLPTIPETEDEISPDKVILCL.

A disordered region spans residues 1 to 48; the sequence is MAGEGDQQDAAHNMGNHLPLLPADSEDEDDEIEMEVEDQDSKEARKPN. The segment covering 24–38 has biased composition (acidic residues); it reads DSEDEDDEIEMEVED. Residue S25 is modified to Phosphoserine. The region spanning 84 to 322 is the Lon N-terminal domain; it reads IPVLPEVLMI…CELDIMNKCT (239 aa). The 109-residue stretch at 321–429 folds into the CULT domain; sequence CTSLCCKQCQ…LTRSALLPTI (109 aa). Residues C326 and C329 each coordinate Zn(2+). (S)-thalidomide is bound by residues H381, W383, and W389. Zn(2+) is bound by residues C394 and C397.

Belongs to the CRBN family. Component of a DCX (DDB1-CUL4-X-box) protein ligase complex, at least composed of CRBN, CUL4A, DDB1 and RBX1. Interacts directly with DDB1. Interacts with KCNT1. Interacts with ILF2. Interacts with TRAF6 and ECSIT. In terms of processing, ubiquitinated, ubiquitination is mediated by its own DCX protein ligase complex. In terms of tissue distribution, highly expressed in brain.

The protein localises to the cytoplasm. It localises to the nucleus. It is found in the membrane. It participates in protein modification; protein ubiquitination. Its function is as follows. Substrate recognition component of a DCX (DDB1-CUL4-X-box) E3 protein ligase complex that mediates the ubiquitination and subsequent proteasomal degradation of target proteins, such as MEIS2, ILF2 or GLUL. Normal degradation of key regulatory proteins is required for normal limb outgrowth and expression of the fibroblast growth factor FGF8. Maintains presynaptic glutamate release and consequently, cognitive functions such as memory and learning, by negatively regulating large-conductance calcium-activated potassium (BK) channels in excitatory neurons. Likely to function by regulating the assembly and neuronal surface expression of BK channels via its interaction with KCNT1. May also be involved in regulating anxiety-like behaviors via a BK channel-independent mechanism. Plays a negative role in TLR4 signaling by interacting with TRAF6 and ECSIT, leading to inhibition of ECSIT ubiquitination, an important step of the signaling. The polypeptide is Protein cereblon (Crbn) (Mus musculus (Mouse)).